Consider the following 637-residue polypeptide: MPVITLPDGSKREFSNPVTVLDVAADIGPGLAKAAVAGKVDGTLVDCSHVIDKDAELAIVTERDAEGVEVIRHSSAHLLAMAVQSIFPSAQVTIGPVIEDGFYYDFAFERPFTPDDLVKIEEKMQELSDADLPVTRSLMSRSEAVELFKKMGEEYKVEIIASIPTEENLSFYSQGDFIDLCRGPHVPSTGKIKAFKLTKVAGAYWRGDSNNAMLQRIYGTAWGNKKDLKAYLHRIEEAEKRDHRKIGKKLGLFHMQEEAPGMVFWHSDGWTLYQVIEQYMRKQLRKHDYKEIKTPQVVERTLWEKSGHWEKFRDDMFTTQSEDRDFAIKPMNCPCHVQVFNQGLRSYRDLPLRLAEFGSCHRNEASGALHGLMRVRGFTQDDAHIFCTEEQIQEEVGKFIDFLHEVYADFGFSEIIYKLSTRPEKRVGSDEIWDKSEKALADALDAKGLPWEELPGEGAFYGPKVEFSLKDCLGRLWQCGTVQVDFSMPGRLGAQYVSDEQVRKTPVMLHRAILGSFERFIGILIEHYEGAFPSWLAPTQVAILNITDKQADYCKKIGEILNDKGFRVRLDLRNEKINYKIREHTLNRVPFLAVVGDKEVETQCLAIRTRQGEDLGVMSISAFEELLQNEEAKRSRS.

The region spanning 1 to 61 (MPVITLPDGS…DKDAELAIVT (61 aa)) is the TGS domain. The catalytic stretch occupies residues 242–533 (DHRKIGKKLG…LIEHYEGAFP (292 aa)). Residues Cys-333, His-384, and His-510 each coordinate Zn(2+).

This sequence belongs to the class-II aminoacyl-tRNA synthetase family. Homodimer. Requires Zn(2+) as cofactor.

Its subcellular location is the cytoplasm. The enzyme catalyses tRNA(Thr) + L-threonine + ATP = L-threonyl-tRNA(Thr) + AMP + diphosphate + H(+). In terms of biological role, catalyzes the attachment of threonine to tRNA(Thr) in a two-step reaction: L-threonine is first activated by ATP to form Thr-AMP and then transferred to the acceptor end of tRNA(Thr). Also edits incorrectly charged L-seryl-tRNA(Thr). The polypeptide is Threonine--tRNA ligase (Hahella chejuensis (strain KCTC 2396)).